A 71-amino-acid chain; its full sequence is Dermonecrotic toxin LgSicTox-alphaI-Loxn-A (71 aa).

The active site involves histidine 12. Mg(2+) contacts are provided by glutamate 32, aspartate 34, and aspartate 48.

Requires Mg(2+) as cofactor. In terms of processing, contains 2 disulfide bonds. Expressed by the venom gland.

It localises to the secreted. It catalyses the reaction an N-(acyl)-sphingosylphosphocholine = an N-(acyl)-sphingosyl-1,3-cyclic phosphate + choline. It carries out the reaction an N-(acyl)-sphingosylphosphoethanolamine = an N-(acyl)-sphingosyl-1,3-cyclic phosphate + ethanolamine. The enzyme catalyses a 1-acyl-sn-glycero-3-phosphocholine = a 1-acyl-sn-glycero-2,3-cyclic phosphate + choline. The catalysed reaction is a 1-acyl-sn-glycero-3-phosphoethanolamine = a 1-acyl-sn-glycero-2,3-cyclic phosphate + ethanolamine. In terms of biological role, catalyzes the hydrolysis of sphingomyelin. May also act on other phosphatidyl esters. Dermonecrotic toxins cleave the phosphodiester linkage between the phosphate and headgroup of certain phospholipids (sphingolipid and lysolipid substrates), forming an alcohol (often choline) and a cyclic phosphate. This toxin acts on sphingomyelin (SM). It may also act on ceramide phosphoethanolamine (CPE), lysophosphatidylcholine (LPC) and lysophosphatidylethanolamine (LPE), but not on lysophosphatidylserine (LPS), and lysophosphatidylglycerol (LPG). It acts by transphosphatidylation, releasing exclusively cyclic phosphate products as second products. In vivo, induces dermonecrosis, but is not lethal. Induces hemolysis, vascular permeability, edema, inflammatory response, and platelet aggregation. The polypeptide is Dermonecrotic toxin LgSicTox-alphaI-Loxn-A (Loxosceles gaucho (Spider)).